The chain runs to 152 residues: SsrA-binding protein (152 aa).

The protein belongs to the SmpB family.

It is found in the cytoplasm. Its function is as follows. Required for rescue of stalled ribosomes mediated by trans-translation. Binds to transfer-messenger RNA (tmRNA), required for stable association of tmRNA with ribosomes. tmRNA and SmpB together mimic tRNA shape, replacing the anticodon stem-loop with SmpB. tmRNA is encoded by the ssrA gene; the 2 termini fold to resemble tRNA(Ala) and it encodes a 'tag peptide', a short internal open reading frame. During trans-translation Ala-aminoacylated tmRNA acts like a tRNA, entering the A-site of stalled ribosomes, displacing the stalled mRNA. The ribosome then switches to translate the ORF on the tmRNA; the nascent peptide is terminated with the 'tag peptide' encoded by the tmRNA and targeted for degradation. The ribosome is freed to recommence translation, which seems to be the essential function of trans-translation. This chain is SsrA-binding protein, found in Gloeobacter violaceus (strain ATCC 29082 / PCC 7421).